The primary structure comprises 169 residues: Large ribosomal subunit protein uL10 (169 aa).

This sequence belongs to the universal ribosomal protein uL10 family. In terms of assembly, part of the ribosomal stalk of the 50S ribosomal subunit. The N-terminus interacts with L11 and the large rRNA to form the base of the stalk. The C-terminus forms an elongated spine to which L12 dimers bind in a sequential fashion forming a multimeric L10(L12)X complex.

Forms part of the ribosomal stalk, playing a central role in the interaction of the ribosome with GTP-bound translation factors. In Rickettsia massiliae (strain Mtu5), this protein is Large ribosomal subunit protein uL10.